Consider the following 466-residue polypeptide: MSIASVASVFKGEHAVGSKVTVRGWVRTRRDSKAGISFLAVYDGSCFNPIQGVVPNSLDNYDNEVLKLTAGCSVVMTGDVVESPGAGQAFELQVTELEVAGWVDDPDTYPMAAKRHSIEHLRELAHLRPRTNIIGAVARVRNCLSQAIHRFYHEEGFIWVSTPLITASDCEGAGEMFRVSTLDMENLPRTDAGKVDYDKDFFGKEAFLTVSGQLNAETYACALSKVYTFGPTFRAENSNTSRHLAEFWMVEPEVAFANLNDIAGLAEAMLKYAFNAVLTERMDDLTFFAQHVDKTVIDRLQSFVSSDFAQVDYTDAVEILQNCGRTFEFPVSWGIDLSSEHERYLAEEHFKAPVVVKNYPKDIKAFYMRLNDDGKTVAAMDVLAPGIGEIIGGSQREERLDVLDMRLAEMDLNQEDYWWYRDMRRYGTVPHAGFGLGFERLVSYVTGVNNIRDVIPFPRAPRTANF.

Belongs to the class-II aminoacyl-tRNA synthetase family. Homodimer.

Its subcellular location is the cytoplasm. It carries out the reaction tRNA(Asn) + L-asparagine + ATP = L-asparaginyl-tRNA(Asn) + AMP + diphosphate + H(+). In Shewanella baltica (strain OS195), this protein is Asparagine--tRNA ligase.